The chain runs to 217 residues: Adenylate kinase (217 aa).

10–15 lines the ATP pocket; the sequence is GSGKGT. Positions 30-59 are NMP; that stretch reads STGDLLRAAVAAGSELGKQAKAAMDAGELV. AMP-binding positions include T31, R36, 57-59, 85-88, and Q92; these read ELV and GFPR. An LID region spans residues 126-164; the sequence is GRRTCQACGAIYNIYFSPPEVDHRCDKCNSDQLVQRSDD. R127 contacts ATP. Residues C130 and C133 each coordinate Zn(2+). 136–137 is a binding site for ATP; that stretch reads IY. Residues C150 and C153 each coordinate Zn(2+). AMP is bound by residues R161 and R172. ATP is bound at residue D200.

It belongs to the adenylate kinase family. In terms of assembly, monomer.

It is found in the cytoplasm. It catalyses the reaction AMP + ATP = 2 ADP. It functions in the pathway purine metabolism; AMP biosynthesis via salvage pathway; AMP from ADP: step 1/1. Its function is as follows. Catalyzes the reversible transfer of the terminal phosphate group between ATP and AMP. Plays an important role in cellular energy homeostasis and in adenine nucleotide metabolism. This Nitrosococcus oceani (strain ATCC 19707 / BCRC 17464 / JCM 30415 / NCIMB 11848 / C-107) protein is Adenylate kinase.